Reading from the N-terminus, the 775-residue chain is MASLIYRQLLTNSYTVELSDEIQEIGSTKTQDVTVNPGPFAQTNYAPVNWGPGETNDSTTVEPVLDGPYQPTTFNPPVSYWMLLAPTNAGVVVEGTNNTNRWLATILIEPNVQQVERTYTLFGQQVQVTVSNDSQTKWKFVDLSKQTQDGNYSQHGSLLSTPKLYGVMKHGGKIYTYNGETPNATTGYYSTTNFDTVNMTAYCDFYIIPLAQEAKCTEYINNGLPPIQNTRNIVPVSIVSRNIVYTRAQPNQDIVVSKTSLWKEMQYNRDIVIRFKFANSIIKSGGLGYKWSEVSFKPANYQYTYTRDGEEVTAHTTCSVNGINDFNYNGGSLPTDFVISKYEVIKENSFVYIDYWDDSQAFRNMVNVRSLAADLNSVMCTGGDYSFALPVGNYPVMTGGAVSLHSAGVTLSTQFTDFVSLNSLRFRFRLSVEEPPFSILRTRVSGLYGLPAARPNNSQEYYEIAGRFSLISLVPSNDDYQTPIINSVTVRQDLERQLGELRDEFNNLSQQIAMSQLIDLALLPLDMFSMFSGIKSTIDAAKSMATNVMKRFKKSSLANSVSTLTNSLSDAASSISRSASVRSVSSTASAWTEVSNITSDINVTTSSISTQTSTISRRLRLKEMATQTDGMNFDDISAAVLKTKIDKSTQLNTNTLPEIVTEASEKFIPNRAYRVKDDEVLEASTDGKYFAYKVETFEEIPFDVQKFADLVTDSPVISAIIDFKTLKNLNDNYGISRQQALNLLRSDPRVLREFINQDNPIIRNRIESLIMQCRL.

The segment at 65–224 (LDGPYQPTTF…KCTEYINNGL (160 aa)) is spike head. Residues Cys-203 and Cys-216 are joined by a disulfide bond. Positions 248–479 (AQPNQDIVVS…LISLVPSNDD (232 aa)) are spike body and stalk (antigen domain). Residues 308-310 (DGE) carry the DGE motif; interaction with ITGA2/ITGB1 heterodimer motif. Cys-318 and Cys-380 form a disulfide bridge. Residues 389 to 409 (LPVGNYPVMTGGAVSLHSAGV) form a hydrophobic; possible role in virus entry into host cell region. The YGL motif; interaction with ITGA4 signature appears at 448 to 450 (YGL). A coiled-coil region spans residues 484 to 518 (IINSVTVRQDLERQLGELRDEFNNLSQQIAMSQLI). The segment at 510-775 (QQIAMSQLID…IESLIMQCRL (266 aa)) is spike foot. A KID motif; interaction with HSPA8 motif is present at residues 644–646 (KID).

Belongs to the rotavirus VP4 family. Homotrimer. VP4 adopts a dimeric appearance above the capsid surface, while forming a trimeric base anchored inside the capsid layer. Only hints of the third molecule are observed above the capsid surface. It probably performs a series of molecular rearrangements during viral entry. Prior to trypsin cleavage, it is flexible. The priming trypsin cleavage triggers its rearrangement into rigid spikes with approximate two-fold symmetry of their protruding parts. After an unknown second triggering event, cleaved VP4 may undergo another rearrangement, in which two VP5* subunits fold back on themselves and join a third subunit to form a tightly associated trimer, shaped like a folded umbrella. Interacts with VP6. Interacts with VP7. As to quaternary structure, homotrimer. The trimer is coiled-coil stabilized by its C-terminus, however, its N-terminus, known as antigen domain or 'body', seems to be flexible allowing it to self-associate either as a dimer or a trimer. Proteolytic cleavage by trypsin results in activation of VP4 functions and greatly increases infectivity. The penetration into the host cell is dependent on trypsin treatment of VP4. It produces two peptides, VP5* and VP8* that remain associated with the virion. Cleavage of VP4 by trypsin probably occurs in vivo in the lumen of the intestine prior to infection of enterocytes. Trypsin seems to be incorporated into the three-layered viral particles but remains inactive as long as the viral outer capsid is intact and would only be activated upon the solubilization of the latter.

Its subcellular location is the virion. The protein resides in the host rough endoplasmic reticulum. The protein localises to the host cell membrane. It localises to the host cytoplasm. It is found in the host cytoskeleton. Its subcellular location is the host endoplasmic reticulum-Golgi intermediate compartment. Functionally, spike-forming protein that mediates virion attachment to the host epithelial cell receptors and plays a major role in cell penetration, determination of host range restriction and virulence. Rotavirus attachment and entry into the host cell probably involves multiple sequential contacts between the outer capsid proteins VP4 and VP7, and the cell receptors. It is subsequently lost, together with VP7, following virus entry into the host cell. Following entry into the host cell, low intracellular or intravesicular Ca(2+) concentration probably causes the calcium-stabilized VP7 trimers to dissociate from the virion. This step is probably necessary for the membrane-disrupting entry step and the release of VP4, which is locked onto the virion by VP7. During the virus exit from the host cell, VP4 seems to be required to target the newly formed virions to the host cell lipid rafts. Its function is as follows. Forms the spike 'foot' and 'body' and acts as a membrane permeabilization protein that mediates release of viral particles from endosomal compartments into the cytoplasm. During entry, the part of VP5* that protrudes from the virus folds back on itself and reorganizes from a local dimer to a trimer. This reorganization may be linked to membrane penetration by exposing VP5* hydrophobic region. In integrin-dependent strains, VP5* targets the integrin heterodimer ITGA2/ITGB1 for cell attachment. In terms of biological role, forms the head of the spikes and mediates the recognition of specific host cell surface glycans. It is the viral hemagglutinin and an important target of neutralizing antibodies. In sialic acid-dependent strains, VP8* binds to host cell sialic acid, most probably a ganglioside, providing the initial contact. In some other strains, VP8* mediates the attachment to histo-blood group antigens (HBGAs) for viral entry. In Rotavirus A (strain RVA/Cow/United States/NCDV-Lincoln/1969/G6P6[1]) (RV-A), this protein is Outer capsid protein VP4.